The sequence spans 147 residues: MTSQPISNETIIMLPSNVINFSQAEKPEPTNQGQDSLKKRLQAKVKVIGVHSSLAGSILSALSALVGFILLSVNPAALNPASLQCKLDEKDIPTRLLLSYDYHSPYTMDCHRAKASLAGTLSLMLVSTVLEFCLAVLTAVLQWKQTV.

The Cytoplasmic portion of the chain corresponds to 1–52; it reads MTSQPISNETIIMLPSNVINFSQAEKPEPTNQGQDSLKKRLQAKVKVIGVHS. The helical transmembrane segment at 53-73 threads the bilayer; the sequence is SLAGSILSALSALVGFILLSV. Residues 74–120 are Extracellular-facing; it reads NPAALNPASLQCKLDEKDIPTRLLLSYDYHSPYTMDCHRAKASLAGT. Residues 121 to 141 traverse the membrane as a helical segment; that stretch reads LSLMLVSTVLEFCLAVLTAVL. Residues 142 to 147 lie on the Cytoplasmic side of the membrane; sequence QWKQTV.

This sequence belongs to the MS4A family. As to expression, expressed by malignant and fetal tissue at very low levels.

Its subcellular location is the membrane. In terms of biological role, may be involved in signal transduction as a component of a multimeric receptor complex. The sequence is that of Membrane-spanning 4-domains subfamily A member 6E (MS4A6E) from Homo sapiens (Human).